The primary structure comprises 122 residues: Large ribosomal subunit protein uL18 (122 aa).

This sequence belongs to the universal ribosomal protein uL18 family. In terms of assembly, part of the 50S ribosomal subunit; part of the 5S rRNA/L5/L18/L25 subcomplex. Contacts the 5S and 23S rRNAs.

This is one of the proteins that bind and probably mediate the attachment of the 5S RNA into the large ribosomal subunit, where it forms part of the central protuberance. This Citrifermentans bemidjiense (strain ATCC BAA-1014 / DSM 16622 / JCM 12645 / Bem) (Geobacter bemidjiensis) protein is Large ribosomal subunit protein uL18.